The primary structure comprises 151 residues: FUN14 domain-containing protein 1A (151 aa).

Residues 14–17 carry the YXXL motif; sequence YEVL. 3 helical membrane passes run 44–64, 71–91, and 130–150; these read YSVATQIVIGGVSGWCAGFLF, AATAVGGGFLLLQIASHGGYI, and FVKKNIVVSGGFVGGFLLGLA.

It belongs to the FUN14 family.

It localises to the mitochondrion outer membrane. Its function is as follows. Acts as an activator of hypoxia-induced mitophagy, an important mechanism for mitochondrial quality control. The protein is FUN14 domain-containing protein 1A (fundc1-a) of Xenopus laevis (African clawed frog).